The following is a 385-amino-acid chain: Non-structural maintenance of chromosomes element 4 homolog A (385 aa).

The disordered stretch occupies residues 1–69; that stretch reads MSGDSSGRGP…PSDSGDEMMD (69 aa). Basic and acidic residues-rich tracts occupy residues 10-21 and 42-55; these read PEGRGRGRDPHR and SARE…RPSL. Positions 56 to 68 are enriched in acidic residues; it reads EDTEPSDSGDEMM. T345 is modified (phosphothreonine). S377 bears the Phosphoserine mark.

Belongs to the NSE4 family. As to quaternary structure, component of the SMC5-SMC6 complex which consists at least of SMC5, SMC6, NSMCE2, NSMCE1, NSMCE4A or EID3 and NSMCE3. NSMCE1, NSMCE4A or EID3 and NSMCE3 probably form a subcomplex that bridges the head domains of the SMC5:SMC6 heterodimer. Interacts with NSMCE3.

It is found in the nucleus. The protein resides in the chromosome. It localises to the telomere. Functionally, component of the SMC5-SMC6 complex, a complex involved in DNA double-strand breaks by homologous recombination. The complex may promote sister chromatid homologous recombination by recruiting the SMC1-SMC3 cohesin complex to double-strand breaks. The complex is required for telomere maintenance via recombination in ALT (alternative lengthening of telomeres) cell lines and mediates sumoylation of shelterin complex (telosome) components which is proposed to lead to shelterin complex disassembly in ALT-associated PML bodies (APBs). Is involved in positive regulation of response to DNA damage stimulus. The chain is Non-structural maintenance of chromosomes element 4 homolog A (NSMCE4A) from Homo sapiens (Human).